Consider the following 264-residue polypeptide: 3-methyl-2-oxobutanoate hydroxymethyltransferase (264 aa).

Aspartate 45 and aspartate 84 together coordinate Mg(2+). Residues 45–46 (DS), aspartate 84, and lysine 112 contribute to the 3-methyl-2-oxobutanoate site. Glutamate 114 provides a ligand contact to Mg(2+). Glutamate 181 functions as the Proton acceptor in the catalytic mechanism.

It belongs to the PanB family. In terms of assembly, homodecamer; pentamer of dimers. It depends on Mg(2+) as a cofactor.

The protein resides in the cytoplasm. It catalyses the reaction 3-methyl-2-oxobutanoate + (6R)-5,10-methylene-5,6,7,8-tetrahydrofolate + H2O = 2-dehydropantoate + (6S)-5,6,7,8-tetrahydrofolate. It participates in cofactor biosynthesis; (R)-pantothenate biosynthesis; (R)-pantoate from 3-methyl-2-oxobutanoate: step 1/2. Functionally, catalyzes the reversible reaction in which hydroxymethyl group from 5,10-methylenetetrahydrofolate is transferred onto alpha-ketoisovalerate to form ketopantoate. The sequence is that of 3-methyl-2-oxobutanoate hydroxymethyltransferase from Shigella dysenteriae serotype 1 (strain Sd197).